The following is a 362-amino-acid chain: Biotin synthase (362 aa).

In terms of domain architecture, Radical SAM core spans 39–267; it reads NVVQVSTLLS…ETQVRLSAGR (229 aa). The [4Fe-4S] cluster site is built by Cys54, Cys58, and Cys61. Positions 98, 130, 190, and 262 each coordinate [2Fe-2S] cluster. Positions 317–362 are disordered; sequence PFTKVSQPTTVEAKDSRYESLGEKPKWSRPSHTIEKNLELSGKGKN. Residues 328–354 are compositionally biased toward basic and acidic residues; it reads EAKDSRYESLGEKPKWSRPSHTIEKNL.

It belongs to the radical SAM superfamily. Biotin synthase family. As to quaternary structure, homodimer. [4Fe-4S] cluster serves as cofactor. Requires [2Fe-2S] cluster as cofactor.

It catalyses the reaction (4R,5S)-dethiobiotin + (sulfur carrier)-SH + 2 reduced [2Fe-2S]-[ferredoxin] + 2 S-adenosyl-L-methionine = (sulfur carrier)-H + biotin + 2 5'-deoxyadenosine + 2 L-methionine + 2 oxidized [2Fe-2S]-[ferredoxin]. The protein operates within cofactor biosynthesis; biotin biosynthesis; biotin from 7,8-diaminononanoate: step 2/2. Catalyzes the conversion of dethiobiotin (DTB) to biotin by the insertion of a sulfur atom into dethiobiotin via a radical-based mechanism. The chain is Biotin synthase from Flavobacterium psychrophilum (strain ATCC 49511 / DSM 21280 / CIP 103535 / JIP02/86).